A 344-amino-acid chain; its full sequence is Methionine import ATP-binding protein MetN (344 aa).

The 240-residue stretch at 2 to 241 (IELKNIGKQF…PTTQLAQQFI (240 aa)) folds into the ABC transporter domain. An ATP-binding site is contributed by 38–45 (GASGAGKS).

It belongs to the ABC transporter superfamily. Methionine importer (TC 3.A.1.24) family. In terms of assembly, the complex is composed of two ATP-binding proteins (MetN), two transmembrane proteins (MetI) and a solute-binding protein (MetQ).

The protein resides in the cell inner membrane. The catalysed reaction is L-methionine(out) + ATP + H2O = L-methionine(in) + ADP + phosphate + H(+). It carries out the reaction D-methionine(out) + ATP + H2O = D-methionine(in) + ADP + phosphate + H(+). Its function is as follows. Part of the ABC transporter complex MetNIQ involved in methionine import. Responsible for energy coupling to the transport system. This is Methionine import ATP-binding protein MetN from Haemophilus ducreyi (strain 35000HP / ATCC 700724).